The sequence spans 242 residues: Triosephosphate isomerase (242 aa).

8–10 (NWK) is a substrate binding site. Residue His98 is the Electrophile of the active site. Catalysis depends on Glu167, which acts as the Proton acceptor. Substrate-binding positions include Gly173, Ser205, and 226–227 (GG).

It belongs to the triosephosphate isomerase family. Homodimer.

The protein localises to the cytoplasm. It carries out the reaction D-glyceraldehyde 3-phosphate = dihydroxyacetone phosphate. It participates in carbohydrate biosynthesis; gluconeogenesis. The protein operates within carbohydrate degradation; glycolysis; D-glyceraldehyde 3-phosphate from glycerone phosphate: step 1/1. Its function is as follows. Involved in the gluconeogenesis. Catalyzes stereospecifically the conversion of dihydroxyacetone phosphate (DHAP) to D-glyceraldehyde-3-phosphate (G3P). The polypeptide is Triosephosphate isomerase (Mesomycoplasma hyopneumoniae (strain 232) (Mycoplasma hyopneumoniae)).